We begin with the raw amino-acid sequence, 5207 residues long: E3 ubiquitin-protein ligase RNF213 (5207 aa).

Disordered stretches follow at residues 1–20 (MECPSCQHVSKEETPKFCSQ) and 27–365 (PAAP…EADV). Positions 34–43 (SENNNSTMAS) are enriched in polar residues. A compositionally biased stretch (basic residues) spans 89–100 (KKKKRKKKKKGN). Low complexity-rich tracts occupy residues 101–117 (KSASSELASLPLSPASP) and 136–157 (SQAQQSGPTGQPSQPPGTATTP). The segment covering 188–197 (SEAQSSPQFQ) has biased composition (polar residues). A phosphoserine mark is found at Ser208 and Ser217. Over residues 248–266 (GGSSEPGTELQTTEQQAGA) the composition is skewed to polar residues. Basic and acidic residues-rich tracts occupy residues 285–294 (AGKEMKEKTQ), 309–346 (HCQEAETKTKDEMAAAEEKVGKNEQGEPEDLKKPEGKN), and 353–362 (KNEKEQKNQE). Residues 343–374 (EGKNRSAAAVKNEKEQKNQEADVQEVKASTLS) are a coiled coil. Residue Lys1151 forms a Glycyl lysine isopeptide (Lys-Gly) (interchain with G-Cter in SUMO2) linkage. At Ser1258 the chain carries Phosphoserine. Residues 1995-2000 (GVGKSL), Glu2098, Asp2155, and Arg2216 contribute to the ATP site. Position 2273 is a phosphoserine (Ser2273). 2 residues coordinate ATP: Lys2499 and Ser2574. Zn(2+)-binding residues include Cys3997, Cys4000, Cys4012, His4014, Cys4017, Cys4020, Cys4032, Cys4035, Cys4505, and His4509. The segment at 3997–4036 (CSICLGDAKDPVCLPCDHVHCLRCLRAWFASEQMICPYCL) adopts an RING-type zinc-finger fold. Residues 4483–4555 (MPEDLLAQAR…VKDKADRTQT (73 aa)) form an RZ-type zinc finger. The active-site Nucleophile; for E3 ubiquitin-lipopolysaccharide ligase activity is Cys4516. Residues Cys4525 and Cys4528 each contribute to the Zn(2+) site.

Belongs to the AAA ATPase family. Monomer. Interacts with UBE2L3/UBCH7; UBE2L3/UBCH7 is the most efficient ubiquitin-conjugating enzyme E2 for the ubiquitin ligase activity. Interacts with UBE2N/UBC13; promoting 'Lys-63'-linked ubiquitination of target proteins. In terms of assembly, (Microbial infection) Interacts with M.tuberculosis protein Rv3655c, which impairs caspase-8 activation and suppresses macrophage apoptosis by blocking the extrinsic pathway. Post-translationally, autoubiquitinated. In terms of tissue distribution, widely expressed (at protein level). As to expression, major isoform detected in all tissues examined. Minor isoform with restricted expression.

The protein resides in the cytoplasm. It is found in the cytosol. The protein localises to the lipid droplet. The catalysed reaction is S-ubiquitinyl-[E2 ubiquitin-conjugating enzyme]-L-cysteine + [acceptor protein]-L-lysine = [E2 ubiquitin-conjugating enzyme]-L-cysteine + N(6)-ubiquitinyl-[acceptor protein]-L-lysine.. It catalyses the reaction ATP + H2O = ADP + phosphate + H(+). Its pathway is protein modification; protein ubiquitination. Its function is as follows. Atypical E3 ubiquitin ligase that can catalyze ubiquitination of both proteins and lipids, and which is involved in various processes, such as lipid metabolism, angiogenesis and cell-autonomous immunity. Acts as a key immune sensor by catalyzing ubiquitination of the lipid A moiety of bacterial lipopolysaccharide (LPS) via its RZ-type zinc-finger: restricts the proliferation of cytosolic bacteria, such as Salmonella, by generating the bacterial ubiquitin coat through the ubiquitination of LPS. Also acts indirectly by mediating the recruitment of the LUBAC complex, which conjugates linear polyubiquitin chains. Ubiquitination of LPS triggers cell-autonomous immunity, such as antibacterial autophagy, leading to degradation of the microbial invader. Involved in lipid metabolism by regulating fat storage and lipid droplet formation; act by inhibiting the lipolytic process. Also regulates lipotoxicity by inhibiting desaturation of fatty acids. Also acts as an E3 ubiquitin-protein ligase via its RING-type zinc finger: mediates 'Lys-63'-linked ubiquitination of target proteins. Involved in the non-canonical Wnt signaling pathway in vascular development: acts by mediating ubiquitination and degradation of FLNA and NFATC2 downstream of RSPO3, leading to inhibit the non-canonical Wnt signaling pathway and promoting vessel regression. Also has ATPase activity; ATPase activity is required for ubiquitination of LPS. The sequence is that of E3 ubiquitin-protein ligase RNF213 from Homo sapiens (Human).